Reading from the N-terminus, the 386-residue chain is uncharacterized protein (386 aa).

12 consecutive transmembrane segments (helical) span residues 8–28 (VFVIWITTFTTMLGVGFIAPI), 43–63 (IGLIFGSFALARTVAQIPVGV), 79–99 (FFYGVSTLMYNFVSTVLGFLI), 102–122 (IFTGIFSAFVTPVAGSYIAAI), 134–154 (IFNSAITLGFGIGPFIGGILA), 156–176 (MYGIKMPFYFCGFLGILAAII), 216–236 (FIINVSNVMINAGIYAYLALY), 241–261 (NITISQVGFMIALTNILMALL), 272–292 (LGNIMIIIGIFIISFGMYLLS), 297–317 (FLTILASLTIIAVGSSISSTA), 342–362 (INIGMFIGAVSFGFLADILGI), and 365–385 (MYKFSAIFSIVVGIISYLRIE).

It belongs to the major facilitator superfamily.

Its subcellular location is the cell membrane. This is an uncharacterized protein from Methanocaldococcus jannaschii (strain ATCC 43067 / DSM 2661 / JAL-1 / JCM 10045 / NBRC 100440) (Methanococcus jannaschii).